The following is a 452-amino-acid chain: Glutamyl-tRNA(Gln) amidotransferase subunit A (452 aa).

Active-site charge relay system residues include Lys56 and Ser131. The active-site Acyl-ester intermediate is the Ser155.

It belongs to the amidase family. GatA subfamily. Heterotrimer of A, B and C subunits.

The enzyme catalyses L-glutamyl-tRNA(Gln) + L-glutamine + ATP + H2O = L-glutaminyl-tRNA(Gln) + L-glutamate + ADP + phosphate + H(+). Its function is as follows. Allows the formation of correctly charged Gln-tRNA(Gln) through the transamidation of misacylated Glu-tRNA(Gln) in organisms which lack glutaminyl-tRNA synthetase. The reaction takes place in the presence of glutamine and ATP through an activated gamma-phospho-Glu-tRNA(Gln). The polypeptide is Glutamyl-tRNA(Gln) amidotransferase subunit A (Campylobacter curvus (strain 525.92)).